Consider the following 155-residue polypeptide: Ribonuclease H (155 aa).

The 142-residue stretch at 4 to 145 (TEPTVYAYTD…ADRLANRGID (142 aa)) folds into the RNase H type-1 domain. Mg(2+) contacts are provided by Asp-13, Glu-51, Asp-73, and Asp-137.

It belongs to the RNase H family. In terms of assembly, monomer. Requires Mg(2+) as cofactor.

The protein resides in the cytoplasm. The catalysed reaction is Endonucleolytic cleavage to 5'-phosphomonoester.. Functionally, endonuclease that specifically degrades the RNA of RNA-DNA hybrids. The chain is Ribonuclease H from Methylococcus capsulatus (strain ATCC 33009 / NCIMB 11132 / Bath).